The primary structure comprises 289 residues: 4-diphosphocytidyl-2-C-methyl-D-erythritol kinase (289 aa).

K10 is a catalytic residue. 94–104 is a binding site for ATP; it reads PVAAGLAGGSS. D136 is an active-site residue.

It belongs to the GHMP kinase family. IspE subfamily.

It carries out the reaction 4-CDP-2-C-methyl-D-erythritol + ATP = 4-CDP-2-C-methyl-D-erythritol 2-phosphate + ADP + H(+). The protein operates within isoprenoid biosynthesis; isopentenyl diphosphate biosynthesis via DXP pathway; isopentenyl diphosphate from 1-deoxy-D-xylulose 5-phosphate: step 3/6. Catalyzes the phosphorylation of the position 2 hydroxy group of 4-diphosphocytidyl-2C-methyl-D-erythritol. The chain is 4-diphosphocytidyl-2-C-methyl-D-erythritol kinase from Bacillus anthracis.